Here is a 174-residue protein sequence, read N- to C-terminus: Probable inosine/xanthosine triphosphatase (174 aa).

Residue aspartate 63 coordinates Mg(2+).

Belongs to the YjjX NTPase family. As to quaternary structure, homodimer. Requires Mg(2+) as cofactor. Mn(2+) is required as a cofactor.

It carries out the reaction XTP + H2O = XDP + phosphate + H(+). The catalysed reaction is ITP + H2O = IDP + phosphate + H(+). In terms of biological role, phosphatase that hydrolyzes non-canonical purine nucleotides such as XTP and ITP to their respective diphosphate derivatives. Probably excludes non-canonical purines from DNA/RNA precursor pool, thus preventing their incorporation into DNA/RNA and avoiding chromosomal lesions. In Methanocella arvoryzae (strain DSM 22066 / NBRC 105507 / MRE50), this protein is Probable inosine/xanthosine triphosphatase.